The sequence spans 903 residues: Probable leucine--tRNA ligase, mitochondrial (903 aa).

At K68 the chain carries N6-acetyllysine. Positions 92–102 (YPSGKLHMGHV) match the 'HIGH' region motif. K236 is subject to N6-acetyllysine. The short motif at 639-643 (KMSKS) is the 'KMSKS' region element. K642 lines the ATP pocket. S711 carries the post-translational modification Phosphoserine.

It belongs to the class-I aminoacyl-tRNA synthetase family.

It is found in the mitochondrion matrix. The catalysed reaction is tRNA(Leu) + L-leucine + ATP = L-leucyl-tRNA(Leu) + AMP + diphosphate. This Pongo abelii (Sumatran orangutan) protein is Probable leucine--tRNA ligase, mitochondrial (LARS2).